An 89-amino-acid chain; its full sequence is Small ribosomal subunit protein uS15 (89 aa).

This sequence belongs to the universal ribosomal protein uS15 family. In terms of assembly, part of the 30S ribosomal subunit. Forms a bridge to the 50S subunit in the 70S ribosome, contacting the 23S rRNA.

One of the primary rRNA binding proteins, it binds directly to 16S rRNA where it helps nucleate assembly of the platform of the 30S subunit by binding and bridging several RNA helices of the 16S rRNA. Functionally, forms an intersubunit bridge (bridge B4) with the 23S rRNA of the 50S subunit in the ribosome. This chain is Small ribosomal subunit protein uS15, found in Chelativorans sp. (strain BNC1).